Consider the following 115-residue polypeptide: Putative HNH nuclease YajD (115 aa).

The HNH domain occupies 27 to 75; it reads CGRCSREFVYSNLRELTVHHIDHDHTNNPEDGSNWELLCLYCHDHEHSK.

Belongs to the HNH nuclease family.

The protein is Putative HNH nuclease YajD (yajD) of Escherichia coli O157:H7.